The following is a 259-amino-acid chain: Flagellar L-ring protein (259 aa).

The N-terminal stretch at 1–15 (MKRISLIALVTLMSG) is a signal peptide. Cys-16 carries the N-palmitoyl cysteine lipid modification. Cys-16 carries the S-diacylglycerol cysteine lipid modification.

It belongs to the FlgH family. The basal body constitutes a major portion of the flagellar organelle and consists of four rings (L,P,S, and M) mounted on a central rod.

It is found in the cell outer membrane. Its subcellular location is the bacterial flagellum basal body. Its function is as follows. Assembles around the rod to form the L-ring and probably protects the motor/basal body from shearing forces during rotation. This chain is Flagellar L-ring protein, found in Vibrio vulnificus (strain YJ016).